Consider the following 1464-residue polypeptide: Secretory phospholipase A2 receptor (1464 aa).

Positions 1-22 (MLLSPSLLLPLLLLLGAPRGCA) are cleaved as a signal peptide. Residues 23–1398 (EGVAAALTPE…ELPEKGPSHS (1376 aa)) lie on the Extracellular side of the membrane. One can recognise a Ricin B-type lectin domain in the interval 40-163 (KGIFVIQSES…GSGGGDICEY (124 aa)). 17 cysteine pairs are disulfide-bonded: Cys-53–Cys-66, Cys-91–Cys-108, Cys-180–Cys-206, Cys-194–Cys-221, Cys-262–Cys-356, Cys-332–Cys-348, Cys-408–Cys-503, Cys-480–Cys-495, Cys-619–Cys-636, Cys-701–Cys-798, Cys-776–Cys-790, Cys-842–Cys-939, Cys-916–Cys-931, Cys-1069–Cys-1089, Cys-1211–Cys-1225, Cys-1282–Cys-1378, and Cys-1356–Cys-1370. The N-linked (GlcNAc...) asparagine glycan is linked to Asn-95. The 49-residue stretch at 175–223 (AHGMPCMFPFQYNHQWHHECTREGREDDLLWCATTSRYERDEKWGFCPD) folds into the Fibronectin type-II domain. C-type lectin domains follow at residues 240-357 (NSHI…YVCK), 387-504 (YNRN…YVCK), 524-645 (HGGF…MSLC), 675-799 (GLAS…WICK), 821-940 (YQDA…SICK), 967-1098 (FNYK…GFVC), 1123-1234 (YGNR…GAIC), and 1259-1379 (FKSN…FICK). Asn-456 carries an N-linked (GlcNAc...) asparagine glycan. Residues 1399-1419 (IIPLAVVLTLIVIVAICTLSF) traverse the membrane as a helical segment. Over 1420 to 1464 (CIYKHNGGFFRRLAGFRNPYYPATNFSTVHLEENILISDLEKSDQ) the chain is Cytoplasmic. Residues 1437 to 1443 (NPYYPAT) carry the Endocytosis signal motif.

Interacts with sPLA2-IB/PLA2G1B; this interaction mediates intracellular signaling as well as clearance of extracellular sPLA2-IB/PLA2G1B via endocytotic pathway. Interacts with sPLA2-X/PLA2G10; this interaction mediates sPLA2-X/PLA2G10 clearance and inactivation. In terms of processing, the secretory phospholipase A2 receptor form may be produced by the action of metalloproteinases. It contains all extracellular domains and only lacks transmembrane and cytosolic regions. It is however unclear whether this form is produced by proteolytic cleavage as suggested by some experiments, or by alternative splicing.

It localises to the cell membrane. Its subcellular location is the secreted. Functionally, receptor for secretory phospholipase A2 (sPLA2). Also able to bind to snake PA2-like toxins. Although its precise function remains unclear, binding of sPLA2 to its receptor participates in both positive and negative regulation of sPLA2 functions as well as clearance of sPLA2. Binding of sPLA2-IB/PLA2G1B induces various effects depending on the cell type, such as activation of the mitogen-activated protein kinase (MAPK) cascade to induce cell proliferation, the production of lipid mediators, selective release of arachidonic acid in bone marrow-derived mast cells. In neutrophils, binding of sPLA2-IB/PLA2G1B can activate p38 MAPK to stimulate elastase release and cell adhesion. May be involved in responses in pro-inflammatory cytokine productions during endotoxic shock. Also has endocytic properties and rapidly internalizes sPLA2 ligands, which is particularly important for the clearance of extracellular sPLA2s to protect their potent enzymatic activities. The soluble secretory phospholipase A2 receptor form is circulating and acts as a negative regulator of sPLA2 functions by blocking the biological functions of sPLA2-IB/PLA2G1B and sPLA2-X/PLA2G10. The polypeptide is Secretory phospholipase A2 receptor (PLA2R1) (Pongo abelii (Sumatran orangutan)).